Consider the following 399-residue polypeptide: Centrosomal protein 43 (399 aa).

The 33-residue stretch at 70-102 (DGRLVASLVAEFLQFFNLDFTLAVFHPETSTIQ) folds into the LisH domain. The interval 139-217 (EKGPTSVEGA…LSESKSKSSL (79 aa)) is disordered. Thr143 carries the phosphothreonine modification. A phosphoserine mark is found at Ser152 and Ser160. Positions 163–172 (GKTSVNSTPS) are enriched in polar residues. Residue Thr170 is modified to Phosphothreonine. Residues 175–186 (PRYKGQGKKKTS) show a composition bias toward basic residues. Residues 197–217 (SETSQSEPSVSLSESKSKSSL) show a composition bias toward low complexity. Residue Ser202 is modified to Phosphoserine. Position 234 is a phosphothreonine (Thr234). A disordered region spans residues 239–309 (DKSALCPDED…PSLTDAESKR (71 aa)). The span at 245-256 (PDEDDVEGDSFF) shows a compositional bias: acidic residues. Residues 259 to 275 (PIPKPEKTYGWRSEPRK) show a composition bias toward basic and acidic residues. The span at 290-302 (RSGLSSLAGAPSL) shows a compositional bias: low complexity. Phosphoserine occurs at positions 301, 326, and 331. A disordered region spans residues 328–357 (GLGSGEDEDYVDDFNSASHRSEKSELSIGE). The residue at position 337 (Tyr337) is a Phosphotyrosine.

The protein belongs to the CEP43 family. As to quaternary structure, homodimer. Part of a ternary complex that contains CEP350, CEP43 and MAPRE1. Interacts directly with CEP350 and MAPRE1. Interacts with CEP19. Interacts (via N-terminus) with CEP350 (via C-terminus).

The protein resides in the cytoplasm. It is found in the cytoskeleton. Its subcellular location is the microtubule organizing center. It localises to the centrosome. The protein localises to the centriole. The protein resides in the cilium basal body. Its function is as follows. Required for anchoring microtubules to the centrosomes. Required for ciliation. In Rattus norvegicus (Rat), this protein is Centrosomal protein 43 (Cep43).